The sequence spans 360 residues: Holliday junction branch migration complex subunit RuvB (360 aa).

Residues 4-196 (HEEDLDQAEE…FGFTAHLEFY (193 aa)) are large ATPase domain (RuvB-L). Residues leucine 35, arginine 36, glycine 77, lysine 80, threonine 81, threonine 82, 143 to 145 (EDF), arginine 186, tyrosine 196, and arginine 233 each bind ATP. Threonine 81 contacts Mg(2+). The small ATPAse domain (RuvB-S) stretch occupies residues 197 to 267 (EPDELDLIVQ…VAQDALDLYE (71 aa)). The tract at residues 270 to 360 (QLGLDRLDRG…PESDPPLFED (91 aa)) is head domain (RuvB-H). Positions 306, 325, and 330 each coordinate DNA.

It belongs to the RuvB family. As to quaternary structure, homohexamer. Forms an RuvA(8)-RuvB(12)-Holliday junction (HJ) complex. HJ DNA is sandwiched between 2 RuvA tetramers; dsDNA enters through RuvA and exits via RuvB. An RuvB hexamer assembles on each DNA strand where it exits the tetramer. Each RuvB hexamer is contacted by two RuvA subunits (via domain III) on 2 adjacent RuvB subunits; this complex drives branch migration. In the full resolvosome a probable DNA-RuvA(4)-RuvB(12)-RuvC(2) complex forms which resolves the HJ.

The protein localises to the cytoplasm. It catalyses the reaction ATP + H2O = ADP + phosphate + H(+). Its function is as follows. The RuvA-RuvB-RuvC complex processes Holliday junction (HJ) DNA during genetic recombination and DNA repair, while the RuvA-RuvB complex plays an important role in the rescue of blocked DNA replication forks via replication fork reversal (RFR). RuvA specifically binds to HJ cruciform DNA, conferring on it an open structure. The RuvB hexamer acts as an ATP-dependent pump, pulling dsDNA into and through the RuvAB complex. RuvB forms 2 homohexamers on either side of HJ DNA bound by 1 or 2 RuvA tetramers; 4 subunits per hexamer contact DNA at a time. Coordinated motions by a converter formed by DNA-disengaged RuvB subunits stimulates ATP hydrolysis and nucleotide exchange. Immobilization of the converter enables RuvB to convert the ATP-contained energy into a lever motion, pulling 2 nucleotides of DNA out of the RuvA tetramer per ATP hydrolyzed, thus driving DNA branch migration. The RuvB motors rotate together with the DNA substrate, which together with the progressing nucleotide cycle form the mechanistic basis for DNA recombination by continuous HJ branch migration. Branch migration allows RuvC to scan DNA until it finds its consensus sequence, where it cleaves and resolves cruciform DNA. The polypeptide is Holliday junction branch migration complex subunit RuvB (Nocardioides sp. (strain ATCC BAA-499 / JS614)).